Consider the following 199-residue polypeptide: Tegument protein UL14 homolog (199 aa).

Polar residues predominate over residues 176-191; the sequence is TDMNQMQPQPISKNEN. The disordered stretch occupies residues 176 to 199; sequence TDMNQMQPQPISKNENPPTPHTDV.

This sequence belongs to the alphaherpesvirinae HHV-1 UL14 protein family.

It is found in the virion tegument. The protein resides in the host cytoplasm. Its subcellular location is the host nucleus. Contributes to the nuclear transport of the viral transcriptional activator VP16 homolog during the early phase of infection. Therefore, participates indirectly in the regulation of the immediate-early gene expression. Additionally, seems to be important for efficient nuclear targeting of capsids. This is Tegument protein UL14 homolog from Varicella-zoster virus (strain Dumas) (HHV-3).